A 146-amino-acid chain; its full sequence is Prolactin-inducible protein homolog (146 aa).

The first 28 residues, 1-28, serve as a signal peptide directing secretion; it reads MRLLQLLFRASPATLLLVLCLQLGANKA. Position 29 is a pyrrolidone carboxylic acid (glutamine 29). 2 disulfide bridges follow: cysteine 65–cysteine 91 and cysteine 89–cysteine 123. Residue asparagine 105 is glycosylated (N-linked (GlcNAc...) asparagine).

Belongs to the PIP family. In terms of assembly, monomer. Interacts with AZGP1.

It is found in the secreted. In Gorilla gorilla gorilla (Western lowland gorilla), this protein is Prolactin-inducible protein homolog (PIP).